Consider the following 210-residue polypeptide: Ribosomal RNA large subunit methyltransferase E (210 aa).

The S-adenosyl-L-methionine site is built by G55, W57, D75, D93, and D117. Catalysis depends on K157, which acts as the Proton acceptor. Residues 175–210 are disordered; the sequence is YRQVKTTKPPSSRKKSSEMYVVGLDFKPKKNKKSKD.

It belongs to the class I-like SAM-binding methyltransferase superfamily. RNA methyltransferase RlmE family.

The protein resides in the cytoplasm. It catalyses the reaction uridine(2552) in 23S rRNA + S-adenosyl-L-methionine = 2'-O-methyluridine(2552) in 23S rRNA + S-adenosyl-L-homocysteine + H(+). Specifically methylates the uridine in position 2552 of 23S rRNA at the 2'-O position of the ribose in the fully assembled 50S ribosomal subunit. The chain is Ribosomal RNA large subunit methyltransferase E from Methanobrevibacter smithii (strain ATCC 35061 / DSM 861 / OCM 144 / PS).